Here is a 221-residue protein sequence, read N- to C-terminus: Epididymal secretory glutathione peroxidase (221 aa).

An N-terminal signal peptide occupies residues 1–21 (MVTELRVFYLVPLLLASYVQT). Cysteine 73 is an active-site residue.

It belongs to the glutathione peroxidase family. As to expression, epididymis.

Its subcellular location is the secreted. It carries out the reaction 2 glutathione + H2O2 = glutathione disulfide + 2 H2O. Functionally, protects cells and enzymes from oxidative damage, by catalyzing the reduction of hydrogen peroxide, lipid peroxides and organic hydroperoxide, by glutathione. May constitute a glutathione peroxidase-like protective system against peroxide damage in sperm membrane lipids. The polypeptide is Epididymal secretory glutathione peroxidase (Gpx5) (Mus musculus (Mouse)).